The sequence spans 210 residues: Probable nicotinate-nucleotide adenylyltransferase (210 aa).

It belongs to the NadD family.

The catalysed reaction is nicotinate beta-D-ribonucleotide + ATP + H(+) = deamido-NAD(+) + diphosphate. It functions in the pathway cofactor biosynthesis; NAD(+) biosynthesis; deamido-NAD(+) from nicotinate D-ribonucleotide: step 1/1. Its function is as follows. Catalyzes the reversible adenylation of nicotinate mononucleotide (NaMN) to nicotinic acid adenine dinucleotide (NaAD). The protein is Probable nicotinate-nucleotide adenylyltransferase of Streptococcus pyogenes serotype M3 (strain ATCC BAA-595 / MGAS315).